The sequence spans 85 residues: Probable [Fe-S]-dependent transcriptional repressor (85 aa).

4 residues coordinate iron-sulfur cluster: C56, C61, C64, and C71.

Belongs to the FeoC family.

Functionally, may function as a transcriptional regulator that controls feoABC expression. The chain is Probable [Fe-S]-dependent transcriptional repressor from Yersinia pseudotuberculosis serotype O:1b (strain IP 31758).